We begin with the raw amino-acid sequence, 209 residues long: Imidazole glycerol phosphate synthase subunit HisH (209 aa).

Residues Met1–Ser205 form the Glutamine amidotransferase type-1 domain. The active-site Nucleophile is the Cys79. Catalysis depends on residues His180 and Glu182.

Heterodimer of HisH and HisF.

The protein resides in the cytoplasm. It carries out the reaction 5-[(5-phospho-1-deoxy-D-ribulos-1-ylimino)methylamino]-1-(5-phospho-beta-D-ribosyl)imidazole-4-carboxamide + L-glutamine = D-erythro-1-(imidazol-4-yl)glycerol 3-phosphate + 5-amino-1-(5-phospho-beta-D-ribosyl)imidazole-4-carboxamide + L-glutamate + H(+). The catalysed reaction is L-glutamine + H2O = L-glutamate + NH4(+). It participates in amino-acid biosynthesis; L-histidine biosynthesis; L-histidine from 5-phospho-alpha-D-ribose 1-diphosphate: step 5/9. Its function is as follows. IGPS catalyzes the conversion of PRFAR and glutamine to IGP, AICAR and glutamate. The HisH subunit catalyzes the hydrolysis of glutamine to glutamate and ammonia as part of the synthesis of IGP and AICAR. The resulting ammonia molecule is channeled to the active site of HisF. This Bacillus cereus (strain B4264) protein is Imidazole glycerol phosphate synthase subunit HisH.